The chain runs to 420 residues: Nucleobindin-2 (420 aa).

Positions Met-1 to Ala-24 are cleaved as a signal peptide. A DNA-binding region spans residues Arg-171–Pro-223. The segment at Lys-193 to Ser-225 is disordered. A binds to necdin region spans residues Lys-213–Thr-420. EF-hand domains follow at residues Pro-241–Lys-276 and Glu-293–Leu-328. Asp-254, Asn-256, Asp-258, Glu-265, Asp-306, Asn-308, Asp-310, and Glu-317 together coordinate Ca(2+). Residues Glu-304–Glu-334 carry the GBA motif. Residue Ser-332 is modified to Phosphoserine. The span at Ala-365–Tyr-389 shows a compositional bias: basic and acidic residues. The tract at residues Ala-365 to Thr-420 is disordered.

It belongs to the nucleobindin family. As to quaternary structure, interacts (via GBA motif) with guanine nucleotide-binding protein G(i) alpha subunit GNAI3. Preferentially interacts with inactive rather than active GNAI3. Interaction with GNAI3 is inhibited when NUCB2 binds calcium, probably due to a conformational change which renders the GBA motif inaccessible. Binds to the postmitotic growth suppressor NDN; coexpression abolishes NUCB2 secretion. Interacts with MC4R. In terms of tissue distribution, found in liver, heart, thymus, muscle, intestine, kidney, lung, spleen and throughout the brain, in cerebral cortex, hippocampus, hypothalamus and medulla oblongata. Nucb2 and necdin levels were higher in postmitotic neurons.

The protein resides in the cytoplasm. Its subcellular location is the perikaryon. It localises to the endoplasmic reticulum. The protein localises to the golgi apparatus. It is found in the nucleus envelope. The protein resides in the membrane. Its subcellular location is the secreted. Calcium-binding protein which may have a role in calcium homeostasis. Acts as a non-receptor guanine nucleotide exchange factor which binds to and activates guanine nucleotide-binding protein (G-protein) alpha subunit GNAI3. In terms of biological role, anorexigenic peptide, seems to play an important role in hypothalamic pathways regulating food intake and energy homeostasis, acting in a leptin-independent manner. May also exert hypertensive roles and modulate blood pressure through directly acting on peripheral arterial resistance. In intestinal epithelial cells, plays a role in the inhibition of hepatic glucose production via MC4R receptor leading to increased cyclic adenosine monophosphate (cAMP) levels and glucagon-like peptide 1 (GLP-1) secretion. In Mus musculus (Mouse), this protein is Nucleobindin-2 (Nucb2).